A 336-amino-acid polypeptide reads, in one-letter code: Fructose-1,6-bisphosphatase class 1 (336 aa).

Residues glutamate 92, aspartate 115, leucine 117, and aspartate 118 each contribute to the Mg(2+) site. Substrate contacts are provided by residues 118-121 (DGSS), asparagine 211, tyrosine 244, 262-264 (YLY), and lysine 274. Glutamate 280 serves as a coordination point for Mg(2+).

This sequence belongs to the FBPase class 1 family. In terms of assembly, homotetramer. Mg(2+) is required as a cofactor.

It is found in the cytoplasm. It catalyses the reaction beta-D-fructose 1,6-bisphosphate + H2O = beta-D-fructose 6-phosphate + phosphate. It participates in carbohydrate biosynthesis; gluconeogenesis. The sequence is that of Fructose-1,6-bisphosphatase class 1 from Aliivibrio salmonicida (strain LFI1238) (Vibrio salmonicida (strain LFI1238)).